A 478-amino-acid chain; its full sequence is Adenosylhomocysteinase (478 aa).

Residues Thr-57, Asp-139, and Glu-201 each coordinate substrate. Thr-202–Thr-204 provides a ligand contact to NAD(+). 2 residues coordinate substrate: Lys-231 and Asp-235. NAD(+) contacts are provided by residues Asn-236, Gly-265–Gly-270, Glu-288, Asn-323, Ile-344–His-346, and Asn-392.

The protein belongs to the adenosylhomocysteinase family. NAD(+) serves as cofactor.

The protein resides in the cytoplasm. The catalysed reaction is S-adenosyl-L-homocysteine + H2O = L-homocysteine + adenosine. It participates in amino-acid biosynthesis; L-homocysteine biosynthesis; L-homocysteine from S-adenosyl-L-homocysteine: step 1/1. Its function is as follows. May play a key role in the regulation of the intracellular concentration of adenosylhomocysteine. The sequence is that of Adenosylhomocysteinase from Corynebacterium glutamicum (strain R).